A 546-amino-acid polypeptide reads, in one-letter code: MGPDNRRILLATVLSVGILILWQVIFPTKKVPPKPAPPPAAEVAKPAAPASPAPGAAAPAVPAPPPDAPEETVKLAGKGFEATLTTYGGALKSLRLEGDKFRKQEKDREVQIDLVHVTDGQPYPLSLSASPELGGAADVAADPGARAPMRIVAKDASSVTFEGRVGNLAARKTFRVTGKPYELALDVELSGGAGNGTVGVLYPAFMPPDTKSGGIFSGPPLDFVRPVCRAGTTTERFDLAKEGAPEKLEGQVSWAGVDQHYFVAAVLPAEPIGTCTFVRGPVKGAGLAALAVPVEGGARKLSLTVYAGPKDLDTLRGYGRGFESAIDYGAVAKFFALFARGLLYVMRWLEAIVRNWGVAIILLTVLVRLVLFPLTYKSMQSMNEMRKLQPEIEKLKAKFGDDREKMNLAVMQLYQKHKVNPLGGCLPMLLQMPVWFALYAALQTSVELYREPFLWMKDLTAHDPYFILPIAMGISSFVMQKLSPQPADNAQAKMMLYFFPGFFTVIMLFVPGGLTLYIFVNNLLSIVQQQLMMKHQQAAPAPAAGK.

The chain crosses the membrane as a helical span at residues 8–28 (ILLATVLSVGILILWQVIFPT). Residues 31-70 (VPPKPAPPPAAEVAKPAAPASPAPGAAAPAVPAPPPDAPE) form a disordered region. The span at 41 to 60 (AEVAKPAAPASPAPGAAAPA) shows a compositional bias: low complexity. The next 5 helical transmembrane spans lie at 326-346 (IDYG…LYVM), 356-376 (WGVA…PLTY), 422-442 (LGGC…YAAL), 459-479 (LTAH…SFVM), and 498-518 (FFPG…TLYI).

This sequence belongs to the OXA1/ALB3/YidC family. Type 1 subfamily. Interacts with the Sec translocase complex via SecD. Specifically interacts with transmembrane segments of nascent integral membrane proteins during membrane integration.

It is found in the cell inner membrane. In terms of biological role, required for the insertion and/or proper folding and/or complex formation of integral membrane proteins into the membrane. Involved in integration of membrane proteins that insert both dependently and independently of the Sec translocase complex, as well as at least some lipoproteins. Aids folding of multispanning membrane proteins. The polypeptide is Membrane protein insertase YidC (Anaeromyxobacter sp. (strain K)).